The primary structure comprises 170 residues: Adenine phosphoribosyltransferase (170 aa).

Belongs to the purine/pyrimidine phosphoribosyltransferase family. As to quaternary structure, homodimer.

Its subcellular location is the cytoplasm. The enzyme catalyses AMP + diphosphate = 5-phospho-alpha-D-ribose 1-diphosphate + adenine. Its pathway is purine metabolism; AMP biosynthesis via salvage pathway; AMP from adenine: step 1/1. Catalyzes a salvage reaction resulting in the formation of AMP, that is energically less costly than de novo synthesis. This chain is Adenine phosphoribosyltransferase, found in Streptococcus pneumoniae (strain Hungary19A-6).